Reading from the N-terminus, the 124-residue chain is uncharacterized protein (124 aa).

A helical transmembrane segment spans residues 70–90; the sequence is LLYLALVLLLVVILSTAFFSI.

It localises to the membrane. This is an uncharacterized protein from Saccharomyces cerevisiae (strain ATCC 204508 / S288c) (Baker's yeast).